The following is a 243-amino-acid chain: Peptide deformylase, mitochondrial (243 aa).

The transit peptide at 1–39 (MARLWGALSLWPLWAAVPWGGAAAVGVRACSSTAAPDGV) directs the protein to the mitochondrion. Substrate is bound by residues G71, P169, and G171. The tract at residues 165 to 175 (LVTFPEGCESV) is hydrophobic dimerization interface. Positions 172 and 214 each coordinate Co(2+). Residue E215 is part of the active site. Residue H218 coordinates Co(2+).

It belongs to the polypeptide deformylase family. In terms of assembly, homodimer. The cofactor is Co(2+). As to expression, ubiquitous.

Its subcellular location is the mitochondrion. It carries out the reaction N-terminal N-formyl-L-methionyl-[peptide] + H2O = N-terminal L-methionyl-[peptide] + formate. Its function is as follows. Removes the formyl group from the N-terminal Met of newly synthesized proteins. This Homo sapiens (Human) protein is Peptide deformylase, mitochondrial.